Consider the following 576-residue polypeptide: Minor capsid protein P2 (576 aa).

Positions 13-35 (LFLYTNSIEMELLAVASIIGYGL) are hydrophobic. Positions 322 to 348 (TRGRPRTGDGDTEPIINPNGERDGTGS) are disordered.

As to quaternary structure, interacts with the major capsid protein.

It localises to the virion. Functionally, one of the minor capsid proteins that constitute a network internal to the major capsid proteins and outside the lipid membrane. The minor capsid proteins glue and stabilize the capsomers. Also acts as a molecular tape measure protein that determines the size of the viral capsid. In Chlorella (PBCV-1), this protein is Minor capsid protein P2.